A 346-amino-acid polypeptide reads, in one-letter code: NADH-ubiquinone oxidoreductase chain 2 (346 aa).

Transmembrane regions (helical) follow at residues 1–21 (MNPHATPVLVLSLALGTTITI), 25–45 (HWVLAWTGLEINTLAIIPLIS), 60–80 (FLTQAAASALVLFSSMTNAWA), 95–115 (CLLLTAAIAIKLGLVPFHFWF), 124–144 (LMTALLLSTLMKFPPLTLLLM), 149–169 (LNPALLTTMALASAALGGWMG), 178–195 (ILAFSSISHLGWIAIILV), 200–219 (LALLTFYLYAIMTSAVFMAL), 242–262 (ATLMLVLLSLAGLPPLTGFMP), 274–294 (EMTPAAMAIAMLSLLSLFFYL), and 326–346 (AILASLSILLLPLSPMIHAIV).

This sequence belongs to the complex I subunit 2 family.

It is found in the mitochondrion inner membrane. The catalysed reaction is a ubiquinone + NADH + 5 H(+)(in) = a ubiquinol + NAD(+) + 4 H(+)(out). Core subunit of the mitochondrial membrane respiratory chain NADH dehydrogenase (Complex I) that is believed to belong to the minimal assembly required for catalysis. Complex I functions in the transfer of electrons from NADH to the respiratory chain. The immediate electron acceptor for the enzyme is believed to be ubiquinone. This Mareca falcata (Falcated duck) protein is NADH-ubiquinone oxidoreductase chain 2 (MT-ND2).